Reading from the N-terminus, the 303-residue chain is Serine/threonine-protein phosphatase 6 catalytic subunit (303 aa).

Asp-51, His-53, Asp-79, and Asn-111 together coordinate Mn(2+). The Proton donor role is filled by His-112. Mn(2+) contacts are provided by His-161 and His-235.

Belongs to the PPP phosphatase family. PP-6 (PP-V) subfamily. Requires Mn(2+) as cofactor.

The protein localises to the cytoplasm. The enzyme catalyses O-phospho-L-seryl-[protein] + H2O = L-seryl-[protein] + phosphate. It catalyses the reaction O-phospho-L-threonyl-[protein] + H2O = L-threonyl-[protein] + phosphate. In terms of biological role, may be involved in controlling cellularization or in regulating transcription of the genes involved in this process. The protein is Serine/threonine-protein phosphatase 6 catalytic subunit (PpV) of Drosophila melanogaster (Fruit fly).